The following is a 70-amino-acid chain: Small ribosomal subunit protein bS21C (70 aa).

Residues 38 to 70 form a disordered region; the sequence is YEKPTTERKRKKAAAVARLRKQVRRSMPPKKKY. Basic residues predominate over residues 45-70; that stretch reads RKRKKAAAVARLRKQVRRSMPPKKKY.

Belongs to the bacterial ribosomal protein bS21 family.

The chain is Small ribosomal subunit protein bS21C from Burkholderia thailandensis (strain ATCC 700388 / DSM 13276 / CCUG 48851 / CIP 106301 / E264).